The following is a 246-amino-acid chain: 4-hydroxy-tetrahydrodipicolinate reductase (246 aa).

7 to 12 serves as a coordination point for NAD(+); sequence GCSGRM. Arg-34 is an NADP(+) binding site. NAD(+)-binding positions include 76–78 and 102–105; these read ATT and CPNT. The active-site Proton donor/acceptor is His-135. Position 136 (His-136) interacts with (S)-2,3,4,5-tetrahydrodipicolinate. Lys-139 (proton donor) is an active-site residue. 145 to 146 is a binding site for (S)-2,3,4,5-tetrahydrodipicolinate; that stretch reads GT.

This sequence belongs to the DapB family.

It is found in the cytoplasm. The enzyme catalyses (S)-2,3,4,5-tetrahydrodipicolinate + NAD(+) + H2O = (2S,4S)-4-hydroxy-2,3,4,5-tetrahydrodipicolinate + NADH + H(+). It carries out the reaction (S)-2,3,4,5-tetrahydrodipicolinate + NADP(+) + H2O = (2S,4S)-4-hydroxy-2,3,4,5-tetrahydrodipicolinate + NADPH + H(+). The protein operates within amino-acid biosynthesis; L-lysine biosynthesis via DAP pathway; (S)-tetrahydrodipicolinate from L-aspartate: step 4/4. In terms of biological role, catalyzes the conversion of 4-hydroxy-tetrahydrodipicolinate (HTPA) to tetrahydrodipicolinate. The chain is 4-hydroxy-tetrahydrodipicolinate reductase from Chlamydia caviae (strain ATCC VR-813 / DSM 19441 / 03DC25 / GPIC) (Chlamydophila caviae).